Consider the following 334-residue polypeptide: DNA-directed RNA polymerase subunit alpha (334 aa).

The interval 1-232 (MIREKLKVST…DLFIPFLHAE (232 aa)) is alpha N-terminal domain (alpha-NTD). The interval 267–334 (QKEITLKSIF…NILQIENHFV (68 aa)) is alpha C-terminal domain (alpha-CTD).

This sequence belongs to the RNA polymerase alpha chain family. In terms of assembly, in plastids the minimal PEP RNA polymerase catalytic core is composed of four subunits: alpha, beta, beta', and beta''. When a (nuclear-encoded) sigma factor is associated with the core the holoenzyme is formed, which can initiate transcription.

The protein resides in the plastid. It is found in the chloroplast. It catalyses the reaction RNA(n) + a ribonucleoside 5'-triphosphate = RNA(n+1) + diphosphate. In terms of biological role, DNA-dependent RNA polymerase catalyzes the transcription of DNA into RNA using the four ribonucleoside triphosphates as substrates. The polypeptide is DNA-directed RNA polymerase subunit alpha (Pisum sativum (Garden pea)).